Consider the following 289-residue polypeptide: Nitrogenase iron protein (289 aa).

8-15 (GKGGIGKS) is an ATP binding site. A [4Fe-4S] cluster-binding site is contributed by C96. Position 99 is an ADP-ribosylarginine; by dinitrogenase reductase ADP-ribosyltransferase (R99). C130 lines the [4Fe-4S] cluster pocket.

Belongs to the NifH/BchL/ChlL family. In terms of assembly, homodimer. [4Fe-4S] cluster serves as cofactor. The reversible ADP-ribosylation of Arg-99 inactivates the nitrogenase reductase and regulates nitrogenase activity.

The enzyme catalyses N2 + 8 reduced [2Fe-2S]-[ferredoxin] + 16 ATP + 16 H2O = H2 + 8 oxidized [2Fe-2S]-[ferredoxin] + 2 NH4(+) + 16 ADP + 16 phosphate + 6 H(+). In terms of biological role, the key enzymatic reactions in nitrogen fixation are catalyzed by the nitrogenase complex, which has 2 components: the iron protein and the molybdenum-iron protein. In Parafrankia sp. (strain EAN1pec), this protein is Nitrogenase iron protein.